We begin with the raw amino-acid sequence, 546 residues long: CTP synthase (546 aa).

The amidoligase domain stretch occupies residues 1-266; the sequence is MTTNYIFVTG…DDLVCQRFGI (266 aa). Ser14 provides a ligand contact to CTP. Position 14 (Ser14) interacts with UTP. Residues 15–20 and Asp72 each bind ATP; that span reads SLGKGI. Mg(2+) is bound by residues Asp72 and Glu140. CTP-binding positions include 147–149, 187–192, and Lys223; these read DIE and KTKPTQ. UTP contacts are provided by residues 187–192 and Lys223; that span reads KTKPTQ. 239-241 lines the ATP pocket; that stretch reads KDV. The Glutamine amidotransferase type-1 domain maps to 291–542; that stretch reads VIGMVGKYIE…VKAAGESVRG (252 aa). Gly352 provides a ligand contact to L-glutamine. Residue Cys379 is the Nucleophile; for glutamine hydrolysis of the active site. L-glutamine is bound by residues 380–383, Glu403, and Arg470; that span reads LGMQ. Active-site residues include His515 and Glu517.

It belongs to the CTP synthase family. Homotetramer.

It catalyses the reaction UTP + L-glutamine + ATP + H2O = CTP + L-glutamate + ADP + phosphate + 2 H(+). The enzyme catalyses L-glutamine + H2O = L-glutamate + NH4(+). The catalysed reaction is UTP + NH4(+) + ATP = CTP + ADP + phosphate + 2 H(+). It participates in pyrimidine metabolism; CTP biosynthesis via de novo pathway; CTP from UDP: step 2/2. Allosterically activated by GTP, when glutamine is the substrate; GTP has no effect on the reaction when ammonia is the substrate. The allosteric effector GTP functions by stabilizing the protein conformation that binds the tetrahedral intermediate(s) formed during glutamine hydrolysis. Inhibited by the product CTP, via allosteric rather than competitive inhibition. Its function is as follows. Catalyzes the ATP-dependent amination of UTP to CTP with either L-glutamine or ammonia as the source of nitrogen. Regulates intracellular CTP levels through interactions with the four ribonucleotide triphosphates. The chain is CTP synthase from Aliivibrio fischeri (strain MJ11) (Vibrio fischeri).